The chain runs to 888 residues: Rab GTPase-activating protein eat-17 (888 aa).

Low complexity predominate over residues Arg-41–Pro-60. Disordered stretches follow at residues Arg-41–Gly-87 and Leu-104–Glu-135. The span at Ser-114 to Ser-123 shows a compositional bias: polar residues. Residues Glu-124 to Ser-133 show a composition bias toward basic and acidic residues. Positions Gly-173–Gly-357 constitute a Rab-GAP TBC domain. Positions Ala-631–Ser-654 are disordered. Positions Glu-694–Asn-770 form a coiled coil. The tract at residues Leu-854–His-888 is disordered. Polar residues predominate over residues Gly-874–His-888.

As to quaternary structure, may interact with rab-6.2 (in GTP-bound form). As to expression, highly expressed in the terminal bulb muscles, pharyngeal muscle, in intestine and vulva.

Functionally, rab GTPase activating protein for the small GTPase rab-6.2. Required for grinder formation, which is the feeding organ that breaks down food. This chain is Rab GTPase-activating protein eat-17, found in Caenorhabditis elegans.